A 377-amino-acid chain; its full sequence is Putative glutamate--cysteine ligase 2 (377 aa).

It belongs to the glutamate--cysteine ligase type 2 family. YbdK subfamily.

It catalyses the reaction L-cysteine + L-glutamate + ATP = gamma-L-glutamyl-L-cysteine + ADP + phosphate + H(+). In terms of biological role, ATP-dependent carboxylate-amine ligase which exhibits weak glutamate--cysteine ligase activity. In Ralstonia pickettii (strain 12J), this protein is Putative glutamate--cysteine ligase 2.